The primary structure comprises 559 residues: Potassium-transporting ATPase potassium-binding subunit (559 aa).

13 helical membrane passes run 5 to 25 (GFLL…PLGS), 27 to 47 (LARL…RILW), 63 to 83 (LLAL…LLFW), 132 to 152 (GLTV…FALI), 170 to 190 (LVRI…LFFI), 253 to 273 (LAQM…FGEA), 283 to 303 (LLWA…WAEV), 327 to 347 (FGVL…CGAV), 356 to 376 (ALGG…FGGV), 379 to 399 (GLYG…LMIG), 416 to 436 (MTAL…ALAM), 484 to 504 (LLAF…MAIA), and 524 to 544 (GALF…LTFI).

The protein belongs to the KdpA family. In terms of assembly, the system is composed of three essential subunits: KdpA, KdpB and KdpC.

Its subcellular location is the cell inner membrane. Functionally, part of the high-affinity ATP-driven potassium transport (or Kdp) system, which catalyzes the hydrolysis of ATP coupled with the electrogenic transport of potassium into the cytoplasm. This subunit binds the periplasmic potassium ions and delivers the ions to the membrane domain of KdpB through an intramembrane tunnel. This is Potassium-transporting ATPase potassium-binding subunit from Salmonella choleraesuis (strain SC-B67).